A 306-amino-acid chain; its full sequence is Homoserine O-acetyltransferase (306 aa).

Catalysis depends on Cys142, which acts as the Acyl-thioester intermediate. Lys163 and Ser192 together coordinate substrate. His235 acts as the Proton acceptor in catalysis. The active site involves Glu237. Arg249 contributes to the substrate binding site.

This sequence belongs to the MetA family.

The protein resides in the cytoplasm. It catalyses the reaction L-homoserine + acetyl-CoA = O-acetyl-L-homoserine + CoA. The protein operates within amino-acid biosynthesis; L-methionine biosynthesis via de novo pathway; O-acetyl-L-homoserine from L-homoserine: step 1/1. In terms of biological role, transfers an acetyl group from acetyl-CoA to L-homoserine, forming acetyl-L-homoserine. The chain is Homoserine O-acetyltransferase from Brucella melitensis biotype 1 (strain ATCC 23456 / CCUG 17765 / NCTC 10094 / 16M).